The sequence spans 137 residues: Large ribosomal subunit protein uL16 (137 aa).

Belongs to the universal ribosomal protein uL16 family. As to quaternary structure, part of the 50S ribosomal subunit.

Its function is as follows. Binds 23S rRNA and is also seen to make contacts with the A and possibly P site tRNAs. The chain is Large ribosomal subunit protein uL16 from Nitrobacter hamburgensis (strain DSM 10229 / NCIMB 13809 / X14).